Consider the following 581-residue polypeptide: 2-hydroxyacyl-CoA lyase 1 (581 aa).

Phosphoserine occurs at positions 4 and 6. A thiamine diphosphate-binding site is contributed by E63. K354, K361, and K368 each carry N6-succinyllysine. Residues 404 to 487 (TMDIGRTMLQ…IILLVVNNNG (84 aa)) are thiamine pyrophosphate binding. Mg(2+)-binding residues include D458 and N485. The Microbody targeting signal motif lies at 579-581 (SNM).

It belongs to the TPP enzyme family. Homotetramer. It depends on Mg(2+) as a cofactor. Thiamine diphosphate serves as cofactor. In terms of tissue distribution, predominanly expressed in liver.

It is found in the peroxisome. The catalysed reaction is a 2-hydroxy-3-methyl fatty acyl-CoA = a 2-methyl-branched fatty aldehyde + formyl-CoA. The enzyme catalyses an (R)-2-hydroxy-long-chain-fatty acyl-CoA = a long-chain fatty aldehyde + formyl-CoA. It catalyses the reaction 2-hydroxy-3-methylhexadecanoyl-CoA = 2-methylpentadecanal + formyl-CoA. It carries out the reaction 2-hydroxyoctadecanoyl-CoA = heptadecanal + formyl-CoA. The catalysed reaction is 2-hydroxyphytanoyl-CoA = 2,6,10,14-tetramethylpentadecanal + formyl-CoA. It participates in lipid metabolism; fatty acid metabolism. Functionally, peroxisomal 2-OH acyl-CoA lyase involved in the cleavage (C1 removal) reaction in the fatty acid alpha-oxydation in a thiamine pyrophosphate (TPP)-dependent manner. Involved in the degradation of 3-methyl-branched fatty acids like phytanic acid and the shortening of 2-hydroxy long-chain fatty acids. Plays a significant role in the biosynthesis of heptadecanal in the liver. This Mus musculus (Mouse) protein is 2-hydroxyacyl-CoA lyase 1 (Hacl1).